The chain runs to 569 residues: Urease subunit alpha (569 aa).

One can recognise a Urease domain in the interval G131–F569. Positions 136, 138, and 219 each coordinate Ni(2+). At K219 the chain carries N6-carboxylysine. H221 contacts substrate. The Ni(2+) site is built by H248 and H274. H322 functions as the Proton donor in the catalytic mechanism. D362 is a Ni(2+) binding site.

It belongs to the metallo-dependent hydrolases superfamily. Urease alpha subunit family. In terms of assembly, heterotrimer of UreA (gamma), UreB (beta) and UreC (alpha) subunits. Three heterotrimers associate to form the active enzyme. It depends on Ni cation as a cofactor. In terms of processing, carboxylation allows a single lysine to coordinate two nickel ions.

The protein localises to the cytoplasm. It carries out the reaction urea + 2 H2O + H(+) = hydrogencarbonate + 2 NH4(+). The protein operates within nitrogen metabolism; urea degradation; CO(2) and NH(3) from urea (urease route): step 1/1. In Ruegeria pomeroyi (strain ATCC 700808 / DSM 15171 / DSS-3) (Silicibacter pomeroyi), this protein is Urease subunit alpha.